We begin with the raw amino-acid sequence, 529 residues long: PTS system alpha-glucoside-specific EIICB component (529 aa).

Residues 1–416 (MMKKVQRFGG…MDLKTPGRED (416 aa)) form the PTS EIIC type-1 domain. 12 helical membrane passes run 8–28 (FGGA…VVGL), 59–79 (GWTV…ISLA), 91–111 (FALY…FYGI), 130–150 (VPTL…VVYL), 170–190 (VFVY…TVLI), 198–218 (ISAL…IYTF), 222–242 (ILIP…GPAA), 272–292 (GGFA…ALAM), 304–324 (VAAL…TEPL), 328–348 (FLFI…TMAA), 352–372 (AFGV…LNWI), and 380–400 (GTVI…FVVF). Residues 450 to 529 (AQKGAIILEA…ERIEEMMKKG (80 aa)) enclose the PTS EIIB type-1 domain. C472 acts as the Phosphocysteine intermediate; for EIIB activity in catalysis.

The protein resides in the cell membrane. Functionally, the phosphoenolpyruvate-dependent sugar phosphotransferase system (sugar PTS), a major carbohydrate active -transport system, catalyzes the phosphorylation of incoming sugar substrates concomitantly with their translocation across the cell membrane. This system is probably involved in transport of the alpha-glucosides trehalulose, turanose, maltulose and palatinose. This chain is PTS system alpha-glucoside-specific EIICB component, found in Leptotrichia buccalis (strain ATCC 14201 / DSM 1135 / JCM 12969 / NCTC 10249 / C-1013-b).